The sequence spans 109 residues: Putative glutaredoxin-C11 (109 aa).

A Glutaredoxin domain is found at 2–108 (AEMVARLASE…PLLKSAGALW (107 aa)). A disulfide bridge connects residues Cys22 and Cys25. Positions 106–109 (ALWL) match the Responsive for interaction with TGA factors motif.

It belongs to the glutaredoxin family. CC-type subfamily.

The protein resides in the cytoplasm. It is found in the nucleus. In terms of biological role, has a glutathione-disulfide oxidoreductase activity in the presence of NADPH and glutathione reductase. Reduces low molecular weight disulfides and proteins. This Oryza sativa subsp. japonica (Rice) protein is Putative glutaredoxin-C11 (GRXC11).